Here is a 392-residue protein sequence, read N- to C-terminus: DNA replication and repair protein RecF (392 aa).

ATP is bound at residue 30-37 (GRNGFGKT).

The protein belongs to the RecF family.

It localises to the cytoplasm. In terms of biological role, the RecF protein is involved in DNA metabolism; it is required for DNA replication and normal SOS inducibility. RecF binds preferentially to single-stranded, linear DNA. It also seems to bind ATP. The chain is DNA replication and repair protein RecF from Corynebacterium aurimucosum (strain ATCC 700975 / DSM 44827 / CIP 107346 / CN-1) (Corynebacterium nigricans).